Consider the following 30-residue polypeptide: Glucagon-like peptide (30 aa).

Position 30 is an arginine amide (R30).

The protein belongs to the glucagon family.

It is found in the secreted. This is Glucagon-like peptide from Anguilla anguilla (European freshwater eel).